We begin with the raw amino-acid sequence, 299 residues long: Porphobilinogen deaminase (299 aa).

Cys-234 carries the post-translational modification S-(dipyrrolylmethanemethyl)cysteine.

The protein belongs to the HMBS family. As to quaternary structure, monomer. Dipyrromethane is required as a cofactor.

It carries out the reaction 4 porphobilinogen + H2O = hydroxymethylbilane + 4 NH4(+). The protein operates within porphyrin-containing compound metabolism; protoporphyrin-IX biosynthesis; coproporphyrinogen-III from 5-aminolevulinate: step 2/4. Tetrapolymerization of the monopyrrole PBG into the hydroxymethylbilane pre-uroporphyrinogen in several discrete steps. The sequence is that of Porphobilinogen deaminase from Corynebacterium efficiens (strain DSM 44549 / YS-314 / AJ 12310 / JCM 11189 / NBRC 100395).